The primary structure comprises 358 residues: NADH-quinone oxidoreductase subunit H (358 aa).

Helical transmembrane passes span 20-40 (ITVG…IPLI), 95-115 (ALFY…WAVI), 128-148 (IGLL…IIAG), 168-188 (ISYE…SGSM), 206-226 (VFSW…ISAV), 253-273 (GFAF…IAAL), 295-315 (TPSA…YLWI), and 334-354 (VLIP…ISPL).

It belongs to the complex I subunit 1 family. As to quaternary structure, NDH-1 is composed of 14 different subunits. Subunits NuoA, H, J, K, L, M, N constitute the membrane sector of the complex.

Its subcellular location is the cell inner membrane. It carries out the reaction a quinone + NADH + 5 H(+)(in) = a quinol + NAD(+) + 4 H(+)(out). NDH-1 shuttles electrons from NADH, via FMN and iron-sulfur (Fe-S) centers, to quinones in the respiratory chain. The immediate electron acceptor for the enzyme in this species is believed to be ubiquinone. Couples the redox reaction to proton translocation (for every two electrons transferred, four hydrogen ions are translocated across the cytoplasmic membrane), and thus conserves the redox energy in a proton gradient. This subunit may bind ubiquinone. The chain is NADH-quinone oxidoreductase subunit H from Neisseria meningitidis serogroup B (strain ATCC BAA-335 / MC58).